A 101-amino-acid polypeptide reads, in one-letter code: Non-histone chromosomal protein HMG-14 (101 aa).

Positions 1-101 (MPKRKVSSAE…EAEEKEAKSD (101 aa)) are disordered. An ADP-ribosylserine modification is found at serine 7. Serine 8 carries the phosphoserine modification. An N6-acetyllysine modification is found at lysine 14. Residue serine 21 is modified to Phosphoserine. Serine 25 is modified (ADP-ribosylserine; alternate). The residue at position 25 (serine 25) is a Phosphoserine; alternate. The residue at position 27 (lysine 27) is an N6-acetyllysine. Basic and acidic residues-rich tracts occupy residues 33–51 (VETKPKKAAGKDKSSDKKV) and 70–86 (ETKEDLPAENGETKNEE). Residue threonine 82 is modified to Phosphothreonine. Residue lysine 83 is modified to N6-acetyllysine. Phosphoserine occurs at positions 87, 90, and 100.

The protein belongs to the HMGN family. As to quaternary structure, interacts with transcriptional regulator SEHBP. Phosphorylation on Ser-21 and Ser-25 weakens binding to nucleosomes and increases the rate of H3 phosphorylation.

It is found in the nucleus. Functionally, binds to the inner side of the nucleosomal DNA thus altering the interaction between the DNA and the histone octamer. May be involved in the process which maintains transcribable genes in a unique chromatin conformation. Inhibits the phosphorylation of nucleosomal histones H3 and H2A by RPS6KA5/MSK1 and RPS6KA3/RSK2. The chain is Non-histone chromosomal protein HMG-14 (HMGN1) from Bos taurus (Bovine).